The sequence spans 312 residues: DNA-directed RNA polymerase subunit alpha (312 aa).

The segment at M1 to S229 is alpha N-terminal domain (alpha-NTD). Residues E239–A312 are alpha C-terminal domain (alpha-CTD).

The protein belongs to the RNA polymerase alpha chain family. In terms of assembly, in cyanobacteria the RNAP catalytic core is composed of 2 alpha, 1 beta, 1 beta', 1 gamma and 1 omega subunit. When a sigma factor is associated with the core the holoenzyme is formed, which can initiate transcription.

It catalyses the reaction RNA(n) + a ribonucleoside 5'-triphosphate = RNA(n+1) + diphosphate. DNA-dependent RNA polymerase catalyzes the transcription of DNA into RNA using the four ribonucleoside triphosphates as substrates. The polypeptide is DNA-directed RNA polymerase subunit alpha (Prochlorococcus marinus (strain NATL1A)).